The chain runs to 615 residues: Translation initiation factor IF-2 (615 aa).

In terms of domain architecture, tr-type G spans 118 to 285; sequence KRPPIVTVMG…AILTLAEINE (168 aa). The tract at residues 127-134 is G1; the sequence is GHVDHGKT. Residue 127 to 134 participates in GTP binding; sequence GHVDHGKT. The G2 stretch occupies residues 152–156; the sequence is GITQH. Residues 173–176 form a G3 region; it reads DTPG. GTP is bound by residues 173–177 and 227–230; these read DTPGH and NKMD. The tract at residues 227-230 is G4; that stretch reads NKMD. The G5 stretch occupies residues 263–265; that stretch reads SAI.

Belongs to the TRAFAC class translation factor GTPase superfamily. Classic translation factor GTPase family. IF-2 subfamily.

The protein resides in the cytoplasm. One of the essential components for the initiation of protein synthesis. Protects formylmethionyl-tRNA from spontaneous hydrolysis and promotes its binding to the 30S ribosomal subunits. Also involved in the hydrolysis of GTP during the formation of the 70S ribosomal complex. The protein is Translation initiation factor IF-2 of Mycoplasmoides gallisepticum (strain R(low / passage 15 / clone 2)) (Mycoplasma gallisepticum).